A 245-amino-acid polypeptide reads, in one-letter code: uncharacterized protein (245 aa).

Basic and acidic residues predominate over residues 162-174 (KEQSDVTTSERTR). The interval 162-183 (KEQSDVTTSERTRSPPGSSKTT) is disordered.

This is an uncharacterized protein from Homo sapiens (Human).